The primary structure comprises 477 residues: MKTWLLALYDVLSRYKNVWNETWKIRKQLDSPVREKDENEFLPAHLELIETPVSNAPRFVSYSIMLFLTLAIIVSIFSNVEIIATASGKFALSGRSKEIKPIENSLVKHIFVKEGEYVKKGELLLKLTALGAEADTLKTKTSLSQAKLEEFRYKSLLEAVEKDQLPILDFSKIDLPFMTENDQKRVTLLIEEQFSTWQKQRHQKTLNLNKKEAEKLSYLARIKKYEGLINTEQVRLDDFRALYKEHAIAKHTVLDEENKYQDAINELEVYKASLMQVENEVLLAKEEQELVTQLFKNDILDKLKQATDNVNLLTFELDKNNQRQQVSEIRAPVSGTVQQLKVHTIDGVVTTAETLMVVVPEEDSLEVTALIQNKDIGFVKEGQEVVIKVEAFPYTRYGYLTGKVKNITLDAIEHPKLGLVFNTIIELDKKTLSTEEKEIPLSAGMEITAEIKTGMRSVISYLLSPLEESIDKSLRER.

Residues 64-84 (IMLFLTLAIIVSIFSNVEIIA) form a helical membrane-spanning segment. Residues 206–287 (LNLNKKEAEK…ENEVLLAKEE (82 aa)) are a coiled coil.

It belongs to the membrane fusion protein (MFP) (TC 8.A.1) family. In terms of assembly, probably part of a complex composed of LtxB, LtxD and TdeA, which forms a single transport channel across the two membranes.

It is found in the cell inner membrane. Its function is as follows. Involved in the export of the LtxA leukotoxin. This is Leukotoxin export protein LtxD from Aggregatibacter actinomycetemcomitans (Actinobacillus actinomycetemcomitans).